Here is a 142-residue protein sequence, read N- to C-terminus: Large ribosomal subunit protein uL11 (142 aa).

It belongs to the universal ribosomal protein uL11 family. In terms of assembly, part of the ribosomal stalk of the 50S ribosomal subunit. Interacts with L10 and the large rRNA to form the base of the stalk. L10 forms an elongated spine to which L12 dimers bind in a sequential fashion forming a multimeric L10(L12)X complex. Post-translationally, one or more lysine residues are methylated.

In terms of biological role, forms part of the ribosomal stalk which helps the ribosome interact with GTP-bound translation factors. This Aliivibrio fischeri (strain MJ11) (Vibrio fischeri) protein is Large ribosomal subunit protein uL11.